The primary structure comprises 536 residues: Lysosomal acid glucosylceramidase (536 aa).

The signal sequence occupies residues 1 to 39 (MEFSSPSREECPKPSGRVSIMAGSLTGLLLLQAVSWASG). Cystine bridges form between cysteine 43/cysteine 55 and cysteine 57/cysteine 62. N-linked (GlcNAc...) asparagine glycosylation is found at asparagine 58, asparagine 98, and asparagine 185. Glutamate 274 (proton donor) is an active-site residue. Asparagine 309 carries N-linked (GlcNAc...) asparagine glycosylation. Residue glutamate 379 is the Nucleophile of the active site. The N-linked (GlcNAc...) asparagine glycan is linked to asparagine 501.

It belongs to the glycosyl hydrolase 30 family. In terms of assembly, interacts with saposin-C. Interacts with SCARB2. Interacts with TCP1. Interacts with GRN; this interaction prevents aggregation of GBA1-SCARB2 complex via interaction with HSPA1A upon stress.

The protein localises to the lysosome membrane. The enzyme catalyses a beta-D-glucosyl-(1&lt;-&gt;1')-N-acylsphing-4-enine + H2O = an N-acylsphing-4-enine + D-glucose. It catalyses the reaction a beta-D-galactosyl-(1&lt;-&gt;1')-N-acylsphing-4-enine + H2O = an N-acylsphing-4-enine + D-galactose. The catalysed reaction is cholesteryl 3-beta-D-glucoside + H2O = cholesterol + D-glucose. It carries out the reaction a beta-D-glucosyl-(1&lt;-&gt;1')-N-acylsphing-4-enine + cholesterol = cholesteryl 3-beta-D-glucoside + an N-acylsphing-4-enine. The enzyme catalyses beta-D-glucosyl-N-(9Z-octadecenoyl)-sphing-4E-enine + cholesterol = N-(9Z-octadecenoyl)-sphing-4-enine + cholesteryl 3-beta-D-glucoside. It catalyses the reaction beta-D-glucosyl-N-octanoylsphing-4E-enine + cholesterol = N-octanoylsphing-4-enine + cholesteryl 3-beta-D-glucoside. The catalysed reaction is beta-D-glucosyl-N-dodecanoylsphing-4-enine + cholesterol = N-dodecanoylsphing-4-enine + cholesteryl 3-beta-D-glucoside. It carries out the reaction beta-D-glucosyl-(1&lt;-&gt;1)-N-octadecanoylsphing-4-enine + cholesterol = N-octadecanoylsphing-4-enine + cholesteryl 3-beta-D-glucoside. The enzyme catalyses beta-D-glucosyl-(1&lt;-&gt;1')-N-(15Z-tetracosenoyl)-sphing-4-enine + cholesterol = N-(15Z-tetracosenoyl)-sphing-4-enine + cholesteryl 3-beta-D-glucoside. It catalyses the reaction a beta-D-galactosyl-(1&lt;-&gt;1')-N-acylsphing-4-enine + cholesterol = cholesteryl 3-beta-D-galactoside + an N-acylsphing-4-enine. The catalysed reaction is 1-(beta-D-galactosyl)-N-dodecanoylsphing-4-enine + cholesterol = cholesteryl 3-beta-D-galactoside + N-dodecanoylsphing-4-enine. It carries out the reaction a beta-D-xylosyl-(1&lt;-&gt;1')-N-acylsphing-4-enine + cholesterol = cholesteryl 3-beta-D-xyloside + an N-acylsphing-4-enine. The enzyme catalyses beta-D-xylosyl-(1&lt;-&gt;1')-N-(9Z-octadecenoyl)-sphing-4-enine + cholesterol = cholesteryl 3-beta-D-xyloside + N-(9Z-octadecenoyl)-sphing-4-enine. Its pathway is steroid metabolism; cholesterol metabolism. The protein operates within sphingolipid metabolism. Glucosylceramidase that catalyzes, within the lysosomal compartment, the hydrolysis of glucosylceramides/GlcCers (such as beta-D-glucosyl-(1&lt;-&gt;1')-N-acylsphing-4-enine) into free ceramides (such as N-acylsphing-4-enine) and glucose. Plays a central role in the degradation of complex lipids and the turnover of cellular membranes. Through the production of ceramides, participates in the PKC-activated salvage pathway of ceramide formation. Catalyzes the glucosylation of cholesterol, through a transglucosylation reaction where glucose is transferred from GlcCer to cholesterol. GlcCer containing mono-unsaturated fatty acids (such as beta-D-glucosyl-N-(9Z-octadecenoyl)-sphing-4-enine) are preferred as glucose donors for cholesterol glucosylation when compared with GlcCer containing same chain length of saturated fatty acids (such as beta-D-glucosyl-N-octadecanoyl-sphing-4-enine). Under specific conditions, may alternatively catalyze the reverse reaction, transferring glucose from cholesteryl 3-beta-D-glucoside to ceramide. Can also hydrolyze cholesteryl 3-beta-D-glucoside producing glucose and cholesterol. Catalyzes the hydrolysis of galactosylceramides/GalCers (such as beta-D-galactosyl-(1&lt;-&gt;1')-N-acylsphing-4-enine), as well as the transfer of galactose between GalCers and cholesterol in vitro, but with lower activity than with GlcCers. Contrary to GlcCer and GalCer, xylosylceramide/XylCer (such as beta-D-xyosyl-(1&lt;-&gt;1')-N-acylsphing-4-enine) is not a good substrate for hydrolysis, however it is a good xylose donor for transxylosylation activity to form cholesteryl 3-beta-D-xyloside. The chain is Lysosomal acid glucosylceramidase (GBA1) from Pan troglodytes (Chimpanzee).